The following is a 1331-amino-acid chain: DNA-directed RNA polymerase subunit beta' (1331 aa).

Positions 60, 62, 75, and 78 each coordinate Zn(2+). Mg(2+) is bound by residues D535, D537, and D539. Zn(2+)-binding residues include C902, C979, C986, and C989.

It belongs to the RNA polymerase beta' chain family. In terms of assembly, the RNAP catalytic core consists of 2 alpha, 1 beta, 1 beta' and 1 omega subunit. When a sigma factor is associated with the core the holoenzyme is formed, which can initiate transcription. Requires Mg(2+) as cofactor. Zn(2+) serves as cofactor.

The enzyme catalyses RNA(n) + a ribonucleoside 5'-triphosphate = RNA(n+1) + diphosphate. In terms of biological role, DNA-dependent RNA polymerase catalyzes the transcription of DNA into RNA using the four ribonucleoside triphosphates as substrates. This Corynebacterium aurimucosum (strain ATCC 700975 / DSM 44827 / CIP 107346 / CN-1) (Corynebacterium nigricans) protein is DNA-directed RNA polymerase subunit beta'.